The sequence spans 461 residues: MGKEKIHINIVVIGHVDSGKSTTTGHLIYKCGGIDKRTIEKFEKEAAEMGKGSFKYAWVLDKLKAERERGITIDISLWKFETGKFYITIIDAPGHRDFIKNMITGTSQADCAVLIVAGGVGEFEAGISKNGQTREHALLAFTLGVKQLIIGVNKMDSTEPPFSQKRFEEITKEVSAYIKKIGYNPATVPFVPISGWHGDNMLEASTNMPWFKGWKIERKEGNASGVTLLEALDCIIPPQRPTAKPLRLPLQDVYKIGGIGTVPVGRVETGVLKPGMIVTFAPSNVTTEVKSVEMHHEALQEALPGDNVGFNVKNISVKDIRRGNVAGDSKNDPPMQAGSFTAQVIILNHPGQISAGYAPVLDCHTAHIACKFAELKQKIDRRSGKKLEDDPKFLKSGDAAIVEMIPGKPMCVESFSDYPPLGRFAVRDMRQTVAVGVIKGVDKKAASSGKVTKSAVKAGKK.

Glycine 2 carries the n,N,N-trimethylglycine modification. The tr-type G domain maps to 5–242; that stretch reads KIHINIVVIG…DCIIPPQRPT (238 aa). The interval 14–21 is G1; the sequence is GHVDSGKS. 14 to 21 serves as a coordination point for GTP; the sequence is GHVDSGKS. The interval 70-74 is G2; sequence GITID. Positions 91-94 are G3; sequence DAPG. GTP is bound by residues 91-95 and 153-156; these read DAPGH and NKMD. Residues 153–156 are G4; the sequence is NKMD. A G5 region spans residues 194–196; that stretch reads SGW. Residues glutamate 301 and glutamate 374 each carry the 5-glutamyl glycerylphosphorylethanolamine modification.

Belongs to the TRAFAC class translation factor GTPase superfamily. Classic translation factor GTPase family. EF-Tu/EF-1A subfamily. Oocyte.

It localises to the cytoplasm. In terms of biological role, this protein promotes the GTP-dependent binding of aminoacyl-tRNA to the A-site of ribosomes during protein biosynthesis. The protein is Elongation factor 1-alpha, oocyte form (eef1ao) of Xenopus laevis (African clawed frog).